The chain runs to 359 residues: Mandelate racemase (359 aa).

Lysine 166 (proton acceptor; specific for S-mandelate) is an active-site residue. Positions 195, 221, and 247 each coordinate Mg(2+). Histidine 297 acts as the Proton acceptor; specific for R-mandelate in catalysis. Glutamate 317 provides a ligand contact to substrate.

This sequence belongs to the mandelate racemase/muconate lactonizing enzyme family. As to quaternary structure, homooctamer. Requires Mg(2+) as cofactor.

The enzyme catalyses (S)-mandelate = (R)-mandelate. It participates in aromatic compound metabolism; (R)-mandelate degradation; benzoate from (R)-mandelate: step 1/4. In Pseudomonas putida (Arthrobacter siderocapsulatus), this protein is Mandelate racemase (mdlA).